Consider the following 84-residue polypeptide: Delta-conotoxin-like MVIA (84 aa).

Positions 1-22 are cleaved as a signal peptide; the sequence is MKLTCVMIVAVLFLTTWTFVTA. Positions 23-49 are excised as a propeptide; that stretch reads DDSRYGLKNLFPKARHEMKNPEASKLN. Intrachain disulfides connect cysteine 54-cysteine 69, cysteine 61-cysteine 73, and cysteine 68-cysteine 77. Proline 65 bears the 4-hydroxyproline mark. Serine amide is present on serine 83.

The protein belongs to the conotoxin O1 superfamily. As to expression, expressed by the venom duct.

Its subcellular location is the secreted. Delta-conotoxins bind to site 6 of voltage-gated sodium channels (Nav) and inhibit the inactivation process. The chain is Delta-conotoxin-like MVIA from Conus magus (Magical cone).